Consider the following 177-residue polypeptide: CASP-like protein 2U1 (177 aa).

The chain crosses the membrane as a helical span at residues 1 to 21 (MVLRIVASLLSIAALVLMAKD). Residues 22–48 (KQVVYLNLAGEELTLEAKHSYVEAFVY) are Cytoplasmic-facing. The helical transmembrane segment at 49-69 (LVYSNGLVAIYCFLLVFALVF) threads the bilayer. Over 70–80 (RLIDKAGCGKS) the chain is Extracellular. The chain crosses the membrane as a helical span at residues 81–101 (AAWIIFLLDQGLAYVLLAAAA). Over 102 to 131 (ASTEVAYVAKRGNNKVGWSEVCSTFGHFCN) the chain is Cytoplasmic. A helical membrane pass occupies residues 132–152 (LVGVSIVITFISVLAMATLSV). Topologically, residues 153 to 177 (MSARRLFKTYGPERKQISSNDAPAI) are extracellular.

It belongs to the Casparian strip membrane proteins (CASP) family. Homodimer and heterodimers.

The protein resides in the cell membrane. In Osmunda lancea (Fern), this protein is CASP-like protein 2U1.